A 157-amino-acid chain; its full sequence is MAEGAEHQQKLTEKDKAELPSTIRDLAETLGIPLIDCIIPCNFCGKFLNYLEACEFDYKKLSLIWKDYCVFACCRVCCGATATYEFNQFYEQTVLGRDIELASGLSIFDIDIRCQTCLAFLDIIEKLDCCGRGLPFHKVRNAWKGICRQCKHFYHDW.

Zinc fingers lie at residues 41-77 and 114-150; these read CNFC…CRVC and CQTC…CRQC.

It belongs to the papillomaviridae E6 protein family. As to quaternary structure, forms homodimers. Interacts with ubiquitin-protein ligase UBE3A/E6-AP; this interaction stimulates UBE3A ubiquitin activity. Interacts with host BAK1.

The protein localises to the host cytoplasm. It localises to the host nucleus. In terms of biological role, plays a major role in the induction and maintenance of cellular transformation. E6 associates with host UBE3A/E6-AP ubiquitin-protein ligase and modulates its activity. Protects host keratinocytes from apoptosis by mediating the degradation of host BAK1. May also inhibit host immune response. In Human papillomavirus type 5b, this protein is Protein E6.